Reading from the N-terminus, the 204-residue chain is Urease accessory protein UreG (204 aa).

Position 11–18 (11–18 (GPVGAGKT)) interacts with GTP.

This sequence belongs to the SIMIBI class G3E GTPase family. UreG subfamily. In terms of assembly, homodimer. UreD, UreF and UreG form a complex that acts as a GTP-hydrolysis-dependent molecular chaperone, activating the urease apoprotein by helping to assemble the nickel containing metallocenter of UreC. The UreE protein probably delivers the nickel.

Its subcellular location is the cytoplasm. Its function is as follows. Facilitates the functional incorporation of the urease nickel metallocenter. This process requires GTP hydrolysis, probably effectuated by UreG. This chain is Urease accessory protein UreG, found in Staphylococcus aureus (strain MSSA476).